Here is a 660-residue protein sequence, read N- to C-terminus: Bifunctional polymyxin resistance protein ArnA (660 aa).

Residues 1–304 (MKAVIFAYHD…TLGLVAGARL (304 aa)) are formyltransferase ArnAFT. His-104 acts as the Proton donor; for formyltransferase activity in catalysis. (6R)-10-formyltetrahydrofolate contacts are provided by residues Arg-114 and 136–140 (VKRAD). Residues 314 to 660 (RRIRVLILGV…RSVDVAERAS (347 aa)) are dehydrogenase ArnADH. Residues Asp-347 and 368–369 (DI) each bind NAD(+). UDP-alpha-D-glucuronate is bound by residues Ala-393, Tyr-398, and 432–433 (TS). Glu-434 serves as the catalytic Proton acceptor; for decarboxylase activity. Residues Arg-460, Asn-492, 526–535 (KLIDGGQQKR), and Tyr-613 each bind UDP-alpha-D-glucuronate. Catalysis depends on Arg-619, which acts as the Proton donor; for decarboxylase activity.

It in the N-terminal section; belongs to the Fmt family. UDP-L-Ara4N formyltransferase subfamily. This sequence in the C-terminal section; belongs to the NAD(P)-dependent epimerase/dehydratase family. UDP-glucuronic acid decarboxylase subfamily. Homohexamer, formed by a dimer of trimers.

It catalyses the reaction UDP-alpha-D-glucuronate + NAD(+) = UDP-beta-L-threo-pentopyranos-4-ulose + CO2 + NADH. It carries out the reaction UDP-4-amino-4-deoxy-beta-L-arabinose + (6R)-10-formyltetrahydrofolate = UDP-4-deoxy-4-formamido-beta-L-arabinose + (6S)-5,6,7,8-tetrahydrofolate + H(+). The protein operates within nucleotide-sugar biosynthesis; UDP-4-deoxy-4-formamido-beta-L-arabinose biosynthesis; UDP-4-deoxy-4-formamido-beta-L-arabinose from UDP-alpha-D-glucuronate: step 1/3. It functions in the pathway nucleotide-sugar biosynthesis; UDP-4-deoxy-4-formamido-beta-L-arabinose biosynthesis; UDP-4-deoxy-4-formamido-beta-L-arabinose from UDP-alpha-D-glucuronate: step 3/3. It participates in bacterial outer membrane biogenesis; lipopolysaccharide biosynthesis. Bifunctional enzyme that catalyzes the oxidative decarboxylation of UDP-glucuronic acid (UDP-GlcUA) to UDP-4-keto-arabinose (UDP-Ara4O) and the addition of a formyl group to UDP-4-amino-4-deoxy-L-arabinose (UDP-L-Ara4N) to form UDP-L-4-formamido-arabinose (UDP-L-Ara4FN). The modified arabinose is attached to lipid A and is required for resistance to polymyxin and cationic antimicrobial peptides. The sequence is that of Bifunctional polymyxin resistance protein ArnA from Salmonella paratyphi C (strain RKS4594).